The sequence spans 447 residues: Cysteine--tRNA ligase (447 aa).

Cysteine 28 lines the Zn(2+) pocket. The 'HIGH' region motif lies at 30–40 (PTVYNYIHIGN). Zn(2+)-binding residues include cysteine 211, histidine 236, and glutamate 240. A 'KMSKS' region motif is present at residues 268 to 272 (KMSKS). Lysine 271 contributes to the ATP binding site.

It belongs to the class-I aminoacyl-tRNA synthetase family. In terms of assembly, monomer. It depends on Zn(2+) as a cofactor.

The protein localises to the cytoplasm. The enzyme catalyses tRNA(Cys) + L-cysteine + ATP = L-cysteinyl-tRNA(Cys) + AMP + diphosphate. The chain is Cysteine--tRNA ligase from Streptococcus thermophilus (strain CNRZ 1066).